Here is a 211-residue protein sequence, read N- to C-terminus: Bcl-2-related ovarian killer protein homolog B (211 aa).

The BH4 motif lies at 32-44 (KELCRDFIHSRIT). Residues 67-83 (VSVVLLKLGDELECMRP) carry the BH3 motif. Positions 113-132 (EVIAMGITWGKVVAIYAVAA) match the BH1 motif. The BH2 motif lies at 165–179 (WLKKRGGWVDILKCV). A helical membrane pass occupies residues 190–210 (WLSTAVLTWREFIKTMYVYLT).

It belongs to the Bcl-2 family. In terms of tissue distribution, expressed strongly in ovary and more weakly in eye. Little expression in other tissues examined.

The protein resides in the membrane. May play a role in apoptosis. Does not appear to show pro-apoptotic activity when expressed ectopically in early embryos. In Danio rerio (Zebrafish), this protein is Bcl-2-related ovarian killer protein homolog B (bokb).